We begin with the raw amino-acid sequence, 460 residues long: A-type ATP synthase subunit B (460 aa).

This sequence belongs to the ATPase alpha/beta chains family. Has multiple subunits with at least A(3), B(3), C, D, E, F, H, I and proteolipid K(x).

The protein resides in the cell membrane. In terms of biological role, component of the A-type ATP synthase that produces ATP from ADP in the presence of a proton gradient across the membrane. The B chain is a regulatory subunit. The sequence is that of A-type ATP synthase subunit B from Methanosarcina acetivorans (strain ATCC 35395 / DSM 2834 / JCM 12185 / C2A).